The primary structure comprises 211 residues: Histidine biosynthesis bifunctional protein HisIE (211 aa).

Positions 1–118 (MNVDDLTFDD…IYGASDRFGI (118 aa)) are phosphoribosyl-AMP cyclohydrolase. The interval 119–211 (IATLEALIAE…LEERHRPKEE (93 aa)) is phosphoribosyl-ATP pyrophosphohydrolase.

The protein in the N-terminal section; belongs to the PRA-CH family. In the C-terminal section; belongs to the PRA-PH family.

It localises to the cytoplasm. The catalysed reaction is 1-(5-phospho-beta-D-ribosyl)-ATP + H2O = 1-(5-phospho-beta-D-ribosyl)-5'-AMP + diphosphate + H(+). It catalyses the reaction 1-(5-phospho-beta-D-ribosyl)-5'-AMP + H2O = 1-(5-phospho-beta-D-ribosyl)-5-[(5-phospho-beta-D-ribosylamino)methylideneamino]imidazole-4-carboxamide. It participates in amino-acid biosynthesis; L-histidine biosynthesis; L-histidine from 5-phospho-alpha-D-ribose 1-diphosphate: step 2/9. It functions in the pathway amino-acid biosynthesis; L-histidine biosynthesis; L-histidine from 5-phospho-alpha-D-ribose 1-diphosphate: step 3/9. This is Histidine biosynthesis bifunctional protein HisIE (hisI) from Halalkalibacterium halodurans (strain ATCC BAA-125 / DSM 18197 / FERM 7344 / JCM 9153 / C-125) (Bacillus halodurans).